The primary structure comprises 137 residues: Large ribosomal subunit protein uL16c (137 aa).

The protein belongs to the universal ribosomal protein uL16 family. In terms of assembly, part of the 50S ribosomal subunit.

The protein localises to the plastid. Its subcellular location is the chloroplast. This is Large ribosomal subunit protein uL16c from Hordeum vulgare (Barley).